Reading from the N-terminus, the 158-residue chain is UPF0758 protein VC_1786 (158 aa).

The 122-residue stretch at Thr-37–Leu-158 folds into the MPN domain. The Zn(2+) site is built by His-108, His-110, and Asp-121. The JAMM motif signature appears at His-108–Asp-121.

It belongs to the UPF0758 family.

This Vibrio cholerae serotype O1 (strain ATCC 39315 / El Tor Inaba N16961) protein is UPF0758 protein VC_1786.